Consider the following 142-residue polypeptide: Large ribosomal subunit protein uL13 (142 aa).

The protein belongs to the universal ribosomal protein uL13 family. As to quaternary structure, part of the 50S ribosomal subunit.

In terms of biological role, this protein is one of the early assembly proteins of the 50S ribosomal subunit, although it is not seen to bind rRNA by itself. It is important during the early stages of 50S assembly. In Yersinia enterocolitica serotype O:8 / biotype 1B (strain NCTC 13174 / 8081), this protein is Large ribosomal subunit protein uL13.